Here is a 729-residue protein sequence, read N- to C-terminus: Fatty acid oxidation complex subunit alpha (729 aa).

The tract at residues 1–189 (MLYKGDTLYL…KIGLVDGVVK (189 aa)) is enoyl-CoA hydratase/isomerase. Asp296 contributes to the substrate binding site. The 3-hydroxyacyl-CoA dehydrogenase stretch occupies residues 311 to 729 (ETPKQAAVLG…ARPVGSLKTA (419 aa)). Residues Met324, Asp343, 400–402 (VVE), Lys407, and Ser429 each bind NAD(+). His450 (for 3-hydroxyacyl-CoA dehydrogenase activity) is an active-site residue. Residue Asn453 coordinates NAD(+). The substrate site is built by Asn500 and Tyr660. The interval 708–729 (RHNEPYYPPVEPARPVGSLKTA) is disordered.

It in the N-terminal section; belongs to the enoyl-CoA hydratase/isomerase family. In the C-terminal section; belongs to the 3-hydroxyacyl-CoA dehydrogenase family. Heterotetramer of two alpha chains (FadB) and two beta chains (FadA).

It carries out the reaction a (3S)-3-hydroxyacyl-CoA + NAD(+) = a 3-oxoacyl-CoA + NADH + H(+). It catalyses the reaction a (3S)-3-hydroxyacyl-CoA = a (2E)-enoyl-CoA + H2O. The catalysed reaction is a 4-saturated-(3S)-3-hydroxyacyl-CoA = a (3E)-enoyl-CoA + H2O. The enzyme catalyses (3S)-3-hydroxybutanoyl-CoA = (3R)-3-hydroxybutanoyl-CoA. It carries out the reaction a (3Z)-enoyl-CoA = a 4-saturated (2E)-enoyl-CoA. It catalyses the reaction a (3E)-enoyl-CoA = a 4-saturated (2E)-enoyl-CoA. It participates in lipid metabolism; fatty acid beta-oxidation. Involved in the aerobic and anaerobic degradation of long-chain fatty acids via beta-oxidation cycle. Catalyzes the formation of 3-oxoacyl-CoA from enoyl-CoA via L-3-hydroxyacyl-CoA. It can also use D-3-hydroxyacyl-CoA and cis-3-enoyl-CoA as substrate. The sequence is that of Fatty acid oxidation complex subunit alpha from Salmonella choleraesuis (strain SC-B67).